The following is a 463-amino-acid chain: Probable glycosyltransferase 3 (463 aa).

Residues methionine 1–threonine 24 are Cytoplasmic-facing. The chain crosses the membrane as a helical; Signal-anchor for type II membrane protein span at residues phenylalanine 25–glycine 47. At isoleucine 48–serine 463 the chain is on the lumenal side. The tract at residues glutamate 82–asparagine 125 is disordered. A compositionally biased stretch (acidic residues) spans threonine 87–leucine 99. The segment covering alanine 103 to alanine 118 has biased composition (low complexity). Asparagine 110, asparagine 125, and asparagine 442 each carry an N-linked (GlcNAc...) asparagine glycan.

The protein belongs to the glycosyltransferase 34 family.

Its subcellular location is the golgi apparatus membrane. Probable glycosyltransferase that may be involved in the biosynthesis of xyloglucan. In Oryza sativa subsp. japonica (Rice), this protein is Probable glycosyltransferase 3.